The following is a 194-amino-acid chain: Transcriptional repressor NrdR (194 aa).

A zinc finger spans residues 3–33; the sequence is CPFCGHADDRVLDTRVQKDGSIRRRRECLEC. In terms of domain architecture, ATP-cone spans 48–138; that stretch reads PFIIKKDGRR…VYRTFKDVQE (91 aa). A compositionally biased stretch (basic and acidic residues) spans 168–179; that stretch reads ESEKSTNHETDS. A disordered region spans residues 168-194; that stretch reads ESEKSTNHETDSKTPSPRTRPPGPLSN. A compositionally biased stretch (pro residues) spans 185 to 194; sequence RTRPPGPLSN.

It belongs to the NrdR family. Requires Zn(2+) as cofactor.

Negatively regulates transcription of bacterial ribonucleotide reductase nrd genes and operons by binding to NrdR-boxes. The chain is Transcriptional repressor NrdR from Bdellovibrio bacteriovorus (strain ATCC 15356 / DSM 50701 / NCIMB 9529 / HD100).